The sequence spans 378 residues: Dual-specificity RNA methyltransferase RlmN (378 aa).

Glutamate 95 serves as the catalytic Proton acceptor. Residues 101 to 345 (EETRGTLCVS…TTIRKTRGDD (245 aa)) enclose the Radical SAM core domain. Cysteine 108 and cysteine 350 are oxidised to a cystine. Residues cysteine 115, cysteine 119, and cysteine 122 each coordinate [4Fe-4S] cluster. S-adenosyl-L-methionine contacts are provided by residues 176–177 (GE), serine 208, 230–232 (SLH), and asparagine 307. Cysteine 350 (S-methylcysteine intermediate) is an active-site residue.

The protein belongs to the radical SAM superfamily. RlmN family. It depends on [4Fe-4S] cluster as a cofactor.

The protein localises to the cytoplasm. It carries out the reaction adenosine(2503) in 23S rRNA + 2 reduced [2Fe-2S]-[ferredoxin] + 2 S-adenosyl-L-methionine = 2-methyladenosine(2503) in 23S rRNA + 5'-deoxyadenosine + L-methionine + 2 oxidized [2Fe-2S]-[ferredoxin] + S-adenosyl-L-homocysteine. The catalysed reaction is adenosine(37) in tRNA + 2 reduced [2Fe-2S]-[ferredoxin] + 2 S-adenosyl-L-methionine = 2-methyladenosine(37) in tRNA + 5'-deoxyadenosine + L-methionine + 2 oxidized [2Fe-2S]-[ferredoxin] + S-adenosyl-L-homocysteine. Specifically methylates position 2 of adenine 2503 in 23S rRNA and position 2 of adenine 37 in tRNAs. m2A2503 modification seems to play a crucial role in the proofreading step occurring at the peptidyl transferase center and thus would serve to optimize ribosomal fidelity. The sequence is that of Dual-specificity RNA methyltransferase RlmN from Burkholderia thailandensis (strain ATCC 700388 / DSM 13276 / CCUG 48851 / CIP 106301 / E264).